The sequence spans 258 residues: Lyso-ornithine lipid O-acyltransferase (258 aa).

The helical transmembrane segment at 7 to 29 (LLRSARLLGLVALGLGLAAWVSL) threads the bilayer.

The protein belongs to the 1-acyl-sn-glycerol-3-phosphate acyltransferase family. OlsA subfamily.

The protein localises to the membrane. It catalyses the reaction a lyso-ornithine lipid + a fatty acyl-[ACP] = an N(2)-[(3R)-3-(acyloxy)acyl]-L-ornithine lipid + holo-[ACP]. It participates in lipid metabolism. Its function is as follows. Catalyzes the second step in the formation of ornithine lipids, which are phosphorus-free membrane lipids. Uses acyl-acyl carrier protein (acyl-AcpP) as an acyl donor and converts lyso-ornithine lipid (LOL) into ornithine lipid (OL). The sequence is that of Lyso-ornithine lipid O-acyltransferase from Pseudomonas aeruginosa (strain ATCC 15692 / DSM 22644 / CIP 104116 / JCM 14847 / LMG 12228 / 1C / PRS 101 / PAO1).